Consider the following 306-residue polypeptide: IN2-2 protein (306 aa).

Catalysis depends on Tyr-64, which acts as the Proton donor. Residue His-131 participates in substrate binding. 210–220 (SPLGRGFFSSG) provides a ligand contact to NADP(+). Residues 272–306 (LGSPPRKRRLPHTWHNKNRQLQPERGGTVCEAYTG) are disordered. Residues 276-289 (PRKRRLPHTWHNKN) are compositionally biased toward basic residues.

It belongs to the aldo/keto reductase family. Aldo/keto reductase 2 subfamily. Leaves and roots.

This is IN2-2 protein (IN2-2) from Zea mays (Maize).